We begin with the raw amino-acid sequence, 478 residues long: Adenosylhomocysteinase (478 aa).

Substrate contacts are provided by threonine 67, aspartate 144, and glutamate 204. Residue 205-207 (TTT) participates in NAD(+) binding. Residues lysine 234 and aspartate 238 each coordinate substrate. NAD(+)-binding positions include asparagine 239, 268–273 (GYGDVG), glutamate 291, asparagine 326, 347–349 (IGH), and asparagine 392.

The protein belongs to the adenosylhomocysteinase family. The cofactor is NAD(+).

The protein localises to the cytoplasm. The enzyme catalyses S-adenosyl-L-homocysteine + H2O = L-homocysteine + adenosine. Its pathway is amino-acid biosynthesis; L-homocysteine biosynthesis; L-homocysteine from S-adenosyl-L-homocysteine: step 1/1. Its function is as follows. May play a key role in the regulation of the intracellular concentration of adenosylhomocysteine. The protein is Adenosylhomocysteinase of Nitrosomonas eutropha (strain DSM 101675 / C91 / Nm57).